A 226-amino-acid chain; its full sequence is Transmembrane 4 L6 family member 20 (226 aa).

Topologically, residues 1–14 are lumenal; the sequence is MTCCEGWTSCNGFS. The helical transmembrane segment at 15–35 threads the bilayer; the sequence is LLILILLGVVINCIPLGISLV. Over 36-49 the chain is Cytoplasmic; sequence EADSTSQNPISCYE. Residues 50-70 traverse the membrane as a helical segment; sequence WWFPGIIGAGLMAIPATTMSL. At 71–83 the chain is on the lumenal side; that stretch reads AARKRACCNNKTG. The helical transmembrane segment at 84-104 threads the bilayer; the sequence is MFLSSLFSVITVVGAVYCMLV. Residues 105–191 are Cytoplasmic-facing; it reads SLQALLEGPL…RIFHFSVFMS (87 aa). Residues 192-212 form a helical membrane-spanning segment; sequence LLLVGILELLFGLSQILIGFL. The Lumenal portion of the chain corresponds to 213–226; sequence GCLCGVSQRRSQIV.

The protein belongs to the L6 tetraspanin family. Glycosylated at Asn-132, Asn-148 and Asn-163 in presence of ceramide which inverts the orientation of TM4SF20 in membranes exposing these residues to the endoplasmic reticulum lumen. Post-translationally, cleaved by signal peptidase at Ser-14 but the peptide does not act as a signal peptide. Cleavage is inhibited by ceramide which inverts the orientation of TM4SF20 in membranes exposing the N-terminus to the cytosol and not to the endoplasmic reticulum lumen.

Its subcellular location is the membrane. The protein resides in the endoplasmic reticulum membrane. Functionally, polytopic transmembrane protein. Inhibits regulated intramembrane proteolysis (RIP) of CREB3L1, inhibiting its activation and the induction of collagen synthesis. In response to ceramide, which alters TM4SF20 membrane topology, stimulates RIP activation of CREB3L1. Ceramide reverses the direction through which transmembrane helices are translocated into the endoplasmic reticulum membrane during translation of TM4SF20, this mechanism is called 'regulated alternative translocation' (RAT) and regulates the function of the transmembrane protein. The polypeptide is Transmembrane 4 L6 family member 20 (Tm4sf20) (Mus musculus (Mouse)).